The sequence spans 370 residues: 4-hydroxy-3-methylbut-2-en-1-yl diphosphate synthase (flavodoxin) (370 aa).

[4Fe-4S] cluster is bound by residues C268, C271, C303, and E310.

The protein belongs to the IspG family. [4Fe-4S] cluster is required as a cofactor.

The enzyme catalyses (2E)-4-hydroxy-3-methylbut-2-enyl diphosphate + oxidized [flavodoxin] + H2O + 2 H(+) = 2-C-methyl-D-erythritol 2,4-cyclic diphosphate + reduced [flavodoxin]. The protein operates within isoprenoid biosynthesis; isopentenyl diphosphate biosynthesis via DXP pathway; isopentenyl diphosphate from 1-deoxy-D-xylulose 5-phosphate: step 5/6. Its function is as follows. Converts 2C-methyl-D-erythritol 2,4-cyclodiphosphate (ME-2,4cPP) into 1-hydroxy-2-methyl-2-(E)-butenyl 4-diphosphate. This is 4-hydroxy-3-methylbut-2-en-1-yl diphosphate synthase (flavodoxin) from Bacillus licheniformis (strain ATCC 14580 / DSM 13 / JCM 2505 / CCUG 7422 / NBRC 12200 / NCIMB 9375 / NCTC 10341 / NRRL NRS-1264 / Gibson 46).